The sequence spans 153 residues: UPF0266 membrane protein YPTB1631 (153 aa).

Helical transmembrane passes span 6–26 (LVLV…EFIM), 45–65 (LDCM…VMAH), and 67–87 (APLT…ISYI).

It belongs to the UPF0266 family.

It localises to the cell inner membrane. The sequence is that of UPF0266 membrane protein YPTB1631 from Yersinia pseudotuberculosis serotype I (strain IP32953).